The sequence spans 360 residues: Aurora kinase B (360 aa).

Residues 93 to 343 enclose the Protein kinase domain; sequence FDIGRPLGKG…LKGVMEHPWV (251 aa). ATP is bound by residues 99-107 and Lys122; that span reads LGKGKFGNV. The active-site Proton acceptor is Asp216.

It belongs to the protein kinase superfamily. Ser/Thr protein kinase family. Aurora subfamily. In terms of assembly, component of the chromosomal passenger complex (CPC).

It localises to the nucleus. The protein localises to the chromosome. Its subcellular location is the centromere. It is found in the cytoplasm. The protein resides in the cytoskeleton. It localises to the spindle. The protein localises to the midbody. The enzyme catalyses L-seryl-[protein] + ATP = O-phospho-L-seryl-[protein] + ADP + H(+). It carries out the reaction L-threonyl-[protein] + ATP = O-phospho-L-threonyl-[protein] + ADP + H(+). With respect to regulation, kinase activity is stimulated by cell-cycle specific phosphorylation. Functionally, serine/threonine-protein kinase component of the chromosomal passenger complex (CPC), a complex that acts as a key regulator of mitosis. The CPC complex has essential functions at the centromere in ensuring correct chromosome alignment and segregation and is required for chromatin-induced microtubule stabilization and spindle assembly. Involved in the bipolar attachment of spindle microtubules to kinetochores and is a key regulator for the onset of cytokinesis during mitosis. Required for central/midzone spindle assembly and cleavage furrow formation. Key component of the cytokinesis checkpoint, a process required to delay abscission to prevent both premature resolution of intercellular chromosome bridges and accumulation of DNA damage. Phosphorylates 'Ser-10' of histone H3 during mitosis. The sequence is that of Aurora kinase B from Xenopus tropicalis (Western clawed frog).